Reading from the N-terminus, the 424-residue chain is PDZ and LIM domain protein 7 (424 aa).

Positions 1–85 constitute a PDZ domain; the sequence is MDSFKVVLEG…RLSLSLSRAQ (85 aa). Ser-78 carries the post-translational modification Phosphoserine. The span at 81–98 shows a compositional bias: polar residues; it reads LSRAQPAQSKPQKVQTPD. Residues 81–221 form a disordered region; it reads LSRAQPAQSK…HTQPATPTPM (141 aa). Thr-96 carries the post-translational modification Phosphothreonine. Basic and acidic residues predominate over residues 110-123; it reads SKQRLMEDTEDWRP. Over residues 174–187 the composition is skewed to pro residues; the sequence is EPWPGPTTPSPTSR. Positions 204 to 221 are enriched in polar residues; that stretch reads KTSTVLTRHTQPATPTPM. LIM zinc-binding domains follow at residues 247-305, 306-365, and 366-424; these read PVCH…VRYA, PSCA…MFGT, and KCRG…FSHV.

As to quaternary structure, binds via its LIM zinc-binding 3 domain (LIM 3) domain to endocytic codes of INSR, but not with those of IGF1R, LDLR, TFRC, or EGFR. Interacts with various PKC isoforms through the LIM zinc-binding domains. Binds to RET in a phosphorylation-independent manner via its LIM zinc-binding 2 domain (LIM 2). Probably part of a complex with SHC and the RET dimer. Interacts with TPM2, TBX4 and TBX5.

It localises to the cytoplasm. The protein resides in the cytoskeleton. Its function is as follows. May function as a scaffold on which the coordinated assembly of proteins can occur. May play a role as an adapter that, via its PDZ domain, localizes LIM-binding proteins to actin filaments of both skeletal muscle and nonmuscle tissues. Involved in both of the two fundamental mechanisms of bone formation, direct bone formation (e.g. embryonic flat bones mandible and cranium), and endochondral bone formation (e.g. embryonic long bone development). Plays a role during fracture repair. Involved in BMP6 signaling pathway. The protein is PDZ and LIM domain protein 7 (PDLIM7) of Bos taurus (Bovine).